We begin with the raw amino-acid sequence, 229 residues long: 3,4-dihydroxy-2-butanone 4-phosphate synthase (229 aa).

D-ribulose 5-phosphate-binding positions include 28 to 29, Asp33, 164 to 168, and Glu188; these read RE and RGGHT. Glu29 is a binding site for Mg(2+). Mg(2+) is bound at residue His167.

The protein belongs to the DHBP synthase family. Homodimer. Mg(2+) is required as a cofactor. Requires Mn(2+) as cofactor.

The enzyme catalyses D-ribulose 5-phosphate = (2S)-2-hydroxy-3-oxobutyl phosphate + formate + H(+). It participates in cofactor biosynthesis; riboflavin biosynthesis; 2-hydroxy-3-oxobutyl phosphate from D-ribulose 5-phosphate: step 1/1. Its function is as follows. Catalyzes the conversion of D-ribulose 5-phosphate to formate and 3,4-dihydroxy-2-butanone 4-phosphate. This Methanothermobacter thermautotrophicus (strain ATCC 29096 / DSM 1053 / JCM 10044 / NBRC 100330 / Delta H) (Methanobacterium thermoautotrophicum) protein is 3,4-dihydroxy-2-butanone 4-phosphate synthase.